The primary structure comprises 504 residues: Glutamate--tRNA ligase (504 aa).

A 'HIGH' region motif is present at residues 25-35; sequence PSPTGNPHVGL. Zn(2+) is bound by residues Cys122, Cys124, Cys149, and Glu151. The 'KMSKS' region signature appears at 270-274; the sequence is KLSKR. Lys273 is a binding site for ATP.

The protein belongs to the class-I aminoacyl-tRNA synthetase family. Glutamate--tRNA ligase type 1 subfamily. As to quaternary structure, monomer. Zn(2+) is required as a cofactor.

The protein resides in the cytoplasm. The catalysed reaction is tRNA(Glu) + L-glutamate + ATP = L-glutamyl-tRNA(Glu) + AMP + diphosphate. In terms of biological role, catalyzes the attachment of glutamate to tRNA(Glu) in a two-step reaction: glutamate is first activated by ATP to form Glu-AMP and then transferred to the acceptor end of tRNA(Glu). This chain is Glutamate--tRNA ligase, found in Streptomyces avermitilis (strain ATCC 31267 / DSM 46492 / JCM 5070 / NBRC 14893 / NCIMB 12804 / NRRL 8165 / MA-4680).